The chain runs to 232 residues: Megakaryocyte and platelet inhibitory receptor G6b (232 aa).

Residues 1 to 17 (MALVLQLLPLLLSKVQG) form the signal peptide. Over 18 to 140 (NPEVSLEGNP…GSTHGSEYSK (123 aa)) the chain is Extracellular. N-linked (GlcNAc...) asparagine glycans are attached at residues N32 and N112. Residues 141 to 161 (VLIPLLGFGLVLGLGALGLVW) traverse the membrane as a helical segment. Over 162–232 (WRRSCVPPSH…DASTVYAVVV (71 aa)) the chain is Cytoplasmic. Short sequence motifs (ITIM motif) lie at residues 200 to 205 (LHYADL) and 226 to 231 (TVYAVV). Y202 carries the phosphotyrosine modification.

In terms of assembly, interacts (via ITIM motif) with PTPN6 and PTPN11. Binds to heparin. In terms of processing, N-glycosylated. May be O-glycosylated. Post-translationally, phosphorylated.

It is found in the cell membrane. Its function is as follows. Inhibitory receptor that acts as a critical regulator of hematopoietic lineage differentiation, megakaryocyte function and platelet production. Inhibits platelet aggregation and activation by agonists such as ADP and collagen-related peptide. This regulation of megakaryocate function as well as platelet production ann activation is done through the inhibition (via the 2 ITIM motifs) of the receptors CLEC1B and GP6:FcRgamma signaling. Appears to operate in a calcium-independent manner. The chain is Megakaryocyte and platelet inhibitory receptor G6b from Rattus norvegicus (Rat).